Consider the following 547-residue polypeptide: Methionine--tRNA ligase (547 aa).

Positions 13-23 match the 'HIGH' region motif; the sequence is PYANGPLHIGH. Residues cysteine 145, cysteine 148, cysteine 158, and cysteine 161 each coordinate Zn(2+). The 'KMSKS' region signature appears at 334–338; sequence QFSKS. Position 337 (lysine 337) interacts with ATP.

It belongs to the class-I aminoacyl-tRNA synthetase family. MetG type 1 subfamily. The cofactor is Zn(2+).

Its subcellular location is the cytoplasm. The enzyme catalyses tRNA(Met) + L-methionine + ATP = L-methionyl-tRNA(Met) + AMP + diphosphate. In terms of biological role, is required not only for elongation of protein synthesis but also for the initiation of all mRNA translation through initiator tRNA(fMet) aminoacylation. This Thermoplasma acidophilum (strain ATCC 25905 / DSM 1728 / JCM 9062 / NBRC 15155 / AMRC-C165) protein is Methionine--tRNA ligase.